Consider the following 178-residue polypeptide: MIEIRFHGRGGQGAVTAAQILAKAAFYDGKFCQAFPFFGVERRGAPVMAFTRIDDKKITLRCQIYEPDYVIVQDATLLESVNVVEGLKKDGAVVINTVKDDLDLGYKTYTIDATGIALDVLGVPIVNTAMVGAFAGVTGIVSIESVKKAILDTFKGKLGEKNAKAAEVAYNEMLKKYG.

In terms of assembly, heterotetramer of one alpha, one beta, one delta and one gamma chain.

It catalyses the reaction 2 oxidized [2Fe-2S]-[ferredoxin] + pyruvate + CoA = 2 reduced [2Fe-2S]-[ferredoxin] + acetyl-CoA + CO2 + H(+). In Methanocaldococcus jannaschii (strain ATCC 43067 / DSM 2661 / JAL-1 / JCM 10045 / NBRC 100440) (Methanococcus jannaschii), this protein is Pyruvate synthase subunit PorC (porC).